Here is a 358-residue protein sequence, read N- to C-terminus: Phospho-N-acetylmuramoyl-pentapeptide-transferase (358 aa).

10 helical membrane-spanning segments follow: residues 28-48 (AALM…ITWL), 70-90 (TPTM…LLWA), 92-112 (LTNI…AVGF), 133-153 (MGGQ…NPDY), 165-185 (VTFD…VAAS), 196-216 (GLAI…IYIT), 233-253 (VGEV…FLWF), 260-280 (VFMG…LALL), 285-305 (LVLA…IVQV), and 335-355 (KIII…LSVL).

This sequence belongs to the glycosyltransferase 4 family. MraY subfamily. Mg(2+) is required as a cofactor.

The protein localises to the cell inner membrane. It carries out the reaction UDP-N-acetyl-alpha-D-muramoyl-L-alanyl-gamma-D-glutamyl-meso-2,6-diaminopimeloyl-D-alanyl-D-alanine + di-trans,octa-cis-undecaprenyl phosphate = di-trans,octa-cis-undecaprenyl diphospho-N-acetyl-alpha-D-muramoyl-L-alanyl-D-glutamyl-meso-2,6-diaminopimeloyl-D-alanyl-D-alanine + UMP. Its pathway is cell wall biogenesis; peptidoglycan biosynthesis. Its function is as follows. Catalyzes the initial step of the lipid cycle reactions in the biosynthesis of the cell wall peptidoglycan: transfers peptidoglycan precursor phospho-MurNAc-pentapeptide from UDP-MurNAc-pentapeptide onto the lipid carrier undecaprenyl phosphate, yielding undecaprenyl-pyrophosphoryl-MurNAc-pentapeptide, known as lipid I. In Desulfovibrio desulfuricans (strain ATCC 27774 / DSM 6949 / MB), this protein is Phospho-N-acetylmuramoyl-pentapeptide-transferase.